The sequence spans 1072 residues: Guanylyl cyclase C (1072 aa).

Residues 1–22 (MTSLLGLAVRLLLFQPTLMFWA) form the signal peptide. The Extracellular portion of the chain corresponds to 23–429 (SQVRQKCHNG…PNDVPGLGPQ (407 aa)). N-linked (GlcNAc...) asparagine glycosylation is found at asparagine 31, asparagine 74, asparagine 78, asparagine 187, asparagine 194, asparagine 306, and asparagine 401. Residues 430-453 (ILMIAVFTLTGIVVVLLLIALLVL) traverse the membrane as a helical segment. Over 454 to 1072 (RKYRRDHELR…NNSDHDSTYF (619 aa)) the chain is Cytoplasmic. A Protein kinase domain is found at 488–748 (LKIDDDRRRD…KIESTLAKIF (261 aa)). In terms of domain architecture, Guanylate cyclase spans 823-953 (TIYFSDIVGF…DTVNTASRME (131 aa)).

Belongs to the adenylyl cyclase class-4/guanylyl cyclase family. In terms of assembly, homotrimer. Interacts via its C-terminal region with PDZK2. Interacts with the lectin chaperone VIP36. In terms of processing, glycosylation at Asn-74 and/or Asn-78 is required for interaction with VIP36 while glycosylation at Asn-401 modulates ligand-mediated GC-C activation.

It is found in the cell membrane. Its subcellular location is the endoplasmic reticulum membrane. It catalyses the reaction GTP = 3',5'-cyclic GMP + diphosphate. Functionally, guanylyl cyclase that catalyzes synthesis of cyclic GMP (cGMP) from GTP. Receptor for the E.coli heat-stable enterotoxin; E.coli enterotoxin markedly stimulates the accumulation of cGMP in mammalian cells expressing GUCY2C. The chain is Guanylyl cyclase C (Gucy2c) from Rattus norvegicus (Rat).